A 322-amino-acid chain; its full sequence is RING finger protein 113B (322 aa).

Residues 24 to 92 (KPGRKGAAGL…EEAAPESLDV (69 aa)) are disordered. Residues 46-60 (SSSSGDEGDTVAQPP) show a composition bias toward low complexity. The segment at 190 to 218 (DYQPDICKDYKETGFCGFGDSCKFLHDRS) adopts a C3H1-type zinc-finger fold. The RING-type zinc finger occupies 256 to 294 (CFICRQAFQNPVVTKCRHYFCESCALEHFRATPRCYICD).

This chain is RING finger protein 113B (RNF113B), found in Homo sapiens (Human).